The chain runs to 1528 residues: DNA topoisomerase 2-alpha (1528 aa).

The residue at position 1 (Met-1) is an N-acetylmethionine. Phosphoserine is present on Ser-4. Lys-17 participates in a covalent cross-link: Glycyl lysine isopeptide (Lys-Gly) (interchain with G-Cter in SUMO2). Residues Asn-90, Asn-119, and 147 to 149 (SSN) contribute to the ATP site. Glycyl lysine isopeptide (Lys-Gly) (interchain with G-Cter in SUMO2) cross-links involve residues Lys-155 and Lys-156. 160–167 (GRNGYGAK) contributes to the ATP binding site. Thr-281 is subject to Phosphothreonine. Residues 341 to 343 (KKK) are interaction with DNA. Lys-351 participates in a covalent cross-link: Glycyl lysine isopeptide (Lys-Gly) (interchain with G-Cter in SUMO2). Residue 375–377 (QTK) participates in ATP binding. Glycyl lysine isopeptide (Lys-Gly) (interchain with G-Cter in SUMO2) cross-links involve residues Lys-385, Lys-396, Lys-415, Lys-417, Lys-424, and Lys-439. Positions 454-571 (CTLILTEGDS…SLLRHRFLEE (118 aa)) constitute a Toprim domain. Glu-460 lines the Mg(2+) pocket. Glycyl lysine isopeptide (Lys-Gly) (interchain with G-Cter in SUMO2) cross-links involve residues Lys-465, Lys-479, and Lys-528. Mg(2+)-binding residues include Asp-540 and Asp-542. Glycyl lysine isopeptide (Lys-Gly) (interchain with G-Cter in SUMO2) cross-links involve residues Lys-583, Lys-598, Lys-613, Lys-621, Lys-624, Lys-631, Lys-638, Lys-654, Lys-661, and Lys-675. Residues 714–1168 (IPSMVDGLKP…SPSDLWKEDL (455 aa)) enclose the Topo IIA-type catalytic domain. Tyr-804 acts as the O-(5'-phospho-DNA)-tyrosine intermediate in catalysis. The tract at residues 989–998 (KLQSSLTCNS) is interaction with DNA. A Glycyl lysine isopeptide (Lys-Gly) (interchain with G-Cter in SUMO2) cross-link involves residue Lys-1074. Disordered regions lie at residues 1090 to 1118 (KEAQ…AAEA) and 1183 to 1211 (KQDE…VLPS). A compositionally biased stretch (acidic residues) spans 1098 to 1107 (DEEENEESDT). Position 1105 is a phosphoserine; by CK1 (Ser-1105). Over residues 1108–1118 (ETSTSDSAAEA) the composition is skewed to low complexity. Glycyl lysine isopeptide (Lys-Gly) (interchain with G-Cter in SUMO2) cross-links involve residues Lys-1193 and Lys-1201. Position 1211 is a phosphoserine (Ser-1211). Lys-1226 participates in a covalent cross-link: Glycyl lysine isopeptide (Lys-Gly) (interchain with G-Cter in SUMO2). Residues 1229–1528 (AEKKIRKKIK…EESDDDDDLF (300 aa)) are disordered. Residue Lys-1238 forms a Glycyl lysine isopeptide (Lys-Gly) (interchain with G-Cter in SUMO1); alternate linkage. Lys-1238 is covalently cross-linked (Glycyl lysine isopeptide (Lys-Gly) (interchain with G-Cter in SUMO2); alternate). Thr-1245 is subject to Phosphothreonine. Basic and acidic residues predominate over residues 1258 to 1270 (QRIEKKQKKEPGA). Residues Lys-1272, Lys-1279, and Lys-1282 each participate in a glycyl lysine isopeptide (Lys-Gly) (interchain with G-Cter in SUMO2) cross-link. 4 positions are modified to phosphoserine: Ser-1291, Ser-1293, Ser-1295, and Ser-1298. Low complexity predominate over residues 1296 to 1306 (DVSSNESNVDV). A Phosphothreonine modification is found at Thr-1323. Positions 1326-1345 (LDSDEDFSGLDEKDEDEDFL) are enriched in acidic residues. Residues Ser-1328 and Ser-1333 each carry the phosphoserine modification. Thr-1350 bears the Phosphothreonine mark. Residues Lys-1359 and Lys-1363 each participate in a glycyl lysine isopeptide (Lys-Gly) (interchain with G-Cter in SUMO2) cross-link. Residues Ser-1370 and Ser-1373 each carry the phosphoserine modification. Residue Lys-1382 forms a Glycyl lysine isopeptide (Lys-Gly) (interchain with G-Cter in SUMO2) linkage. Ser-1384 and Ser-1388 each carry phosphoserine. Residue Lys-1418 forms a Glycyl lysine isopeptide (Lys-Gly) (interchain with G-Cter in SUMO2); alternate linkage. Lys-1418 carries the N6-acetyllysine; alternate modification. Residues 1429–1435 (KKRAAPK) are interaction with PLSCR1. Residue Lys-1438 forms a Glycyl lysine isopeptide (Lys-Gly) (interchain with G-Cter in SUMO2); alternate linkage. Lys-1438 is modified (N6-acetyllysine; alternate). Residues Lys-1450 and Lys-1455 each participate in a glycyl lysine isopeptide (Lys-Gly) (interchain with G-Cter in SUMO2) cross-link. 4 positions are modified to phosphoserine: Ser-1465, Ser-1467, Ser-1470, and Ser-1472. Glycyl lysine isopeptide (Lys-Gly) (interchain with G-Cter in SUMO2) cross-links involve residues Lys-1480 and Lys-1488. Positions 1506–1519 (AKSDRARKPIKYLE) are enriched in basic and acidic residues. The residue at position 1521 (Ser-1521) is a Phosphoserine.

The protein belongs to the type II topoisomerase family. In terms of assembly, homodimer. Interacts with COPS5. Interacts with RECQL5; this stimulates DNA decatenation. Interacts with SETMAR; stimulates the topoisomerase activity. Interacts with DHX9; this interaction occurs in a E2 enzyme UBE2I- and RNA-dependent manner, negatively regulates DHX9-mediated double-stranded DNA and RNA duplex helicase activity and stimulates TOP2A-mediated supercoiled DNA relaxation activity. Interacts with HNRNPU (via C-terminus); this interaction protects the topoisomerase TOP2A from degradation and positively regulates the relaxation of supercoiled DNA in a RNA-dependent manner. Interacts with MCM3AP. Interacts with ERCC6. Interacts with PLSCR1. Interacts with GCNA; this interaction allows the resolution of topoisomerase II (TOP2A) DNA-protein cross-links. Interacts with POL1RA/RPA1 (via dock II) and UBTF in the context of Pol I complex; may assist Pol I transcription initiation by releasing supercoils occurring during DNA unwinding. Interacts with TPRN; TPRN interacts with a number of DNA damage response proteins, is recruited to sites of DNA damage and may play a role in DNA damage repair. The cofactor is Mg(2+). Mn(2+) is required as a cofactor. Requires Ca(2+) as cofactor. Phosphorylation has no effect on catalytic activity. However, phosphorylation at Ser-1105 by CSNK1D/CK1 promotes DNA cleavable complex formation.

Its subcellular location is the cytoplasm. It is found in the nucleus. The protein localises to the nucleoplasm. It localises to the nucleolus. It catalyses the reaction ATP-dependent breakage, passage and rejoining of double-stranded DNA.. Functionally, key decatenating enzyme that alters DNA topology by binding to two double-stranded DNA molecules, generating a double-stranded break in one of the strands, passing the intact strand through the broken strand, and religating the broken strand. May play a role in regulating the period length of BMAL1 transcriptional oscillation. This chain is DNA topoisomerase 2-alpha (Top2a), found in Mus musculus (Mouse).